Consider the following 683-residue polypeptide: Actin-binding LIM protein 3 (683 aa).

An N-acetylmethionine modification is found at M1. LIM zinc-binding domains follow at residues 21-80, 80-140, 149-208, and 208-268; these read IQCY…LYGT, TRCD…MASS, SHCA…QFGI, and IKCE…ARAE. Phosphoserine is present on residues S277, S280, S282, S286, S290, S337, S372, and S373. The tract at residues 372–472 is disordered; it reads SSPGYIDSPT…EDISQTSKYS (101 aa). Y376 bears the Phosphotyrosine mark. Residues S379 and S388 each carry the phosphoserine modification. Polar residues-rich tracts occupy residues 380–393, 406–426, and 454–471; these read PTYSRQGMSPTFSR, GRSSPYHSQLDVRSSTPTSYQ, and STATKSKTSEDISQTSKY. S493, S503, and S504 each carry phosphoserine. A Phosphothreonine modification is found at T543. Phosphoserine occurs at positions 567, 576, and 607. The HP domain maps to 615-683; the sequence is MREYKIYPYE…NELKKQARLF (69 aa). Omega-N-methylarginine is present on R631.

Directly interacts with F-actin and ABRA. In terms of tissue distribution, expressed predominantly in heart and brain.

The protein resides in the cytoplasm. Functionally, may act as scaffold protein. May stimulate ABRA activity and ABRA-dependent SRF transcriptional activity. This Homo sapiens (Human) protein is Actin-binding LIM protein 3 (ABLIM3).